Reading from the N-terminus, the 172-residue chain is LOB domain-containing protein 4 (172 aa).

Positions 12 to 113 constitute an LOB domain; that stretch reads SPCAACKLLR…AQLALAQAEV (102 aa). The tract at residues 125–152 is disordered; sequence PGHGLCPDSPSSSGSPSSKQVSPQDNKG. The span at 131–147 shows a compositional bias: low complexity; the sequence is PDSPSSSGSPSSKQVSP.

The protein belongs to the LOB domain-containing protein family. In terms of tissue distribution, expressed in young shoots, roots, stems, leaves and flowers.

The polypeptide is LOB domain-containing protein 4 (LBD4) (Arabidopsis thaliana (Mouse-ear cress)).